Consider the following 577-residue polypeptide: Outer spore wall assembly protein SHE10 (577 aa).

Residues 1 to 23 (MGKLIKLITTLTVLVSLLQYCCE) form the signal peptide. Coiled-coil stretches lie at residues 379–416 (NETR…ENVE) and 513–561 (ILRS…EEDV). Residues 525 to 545 (RERKERERKEREKAAAEEFQR) show a composition bias toward basic and acidic residues. A disordered region spans residues 525–577 (RERKERERKEREKAAAEEFQRQQELLLQQEEEDEEDVSYTSTSTITTTTTMTL). The span at 562-577 (SYTSTSTITTTTTMTL) shows a compositional bias: low complexity.

It belongs to the SHE10 family. Component of the mitochondria-localized RNase mitochondrial RNA-processing (RNase MRP) composed of one single RNA encoded by the NME1 gene and at least 31 proteins. Absent in the nucleus-localized RNase MRP (NuMRP).

Its subcellular location is the mitochondrion. Functionally, involved in spore wall assembly. May be a component of the mitochondrial RNase MRP (MtMRP), a ribonucleoprotein endoribonuclease involved in the cleaving RNA transcripts to generate primers for DNA replication in mitochondria. The sequence is that of Outer spore wall assembly protein SHE10 from Saccharomyces cerevisiae (strain RM11-1a) (Baker's yeast).